A 259-amino-acid chain; its full sequence is Acyl-[acyl-carrier-protein]--UDP-N-acetylglucosamine O-acyltransferase (259 aa).

This sequence belongs to the transferase hexapeptide repeat family. LpxA subfamily. Homotrimer.

Its subcellular location is the cytoplasm. The enzyme catalyses a (3R)-hydroxyacyl-[ACP] + UDP-N-acetyl-alpha-D-glucosamine = a UDP-3-O-[(3R)-3-hydroxyacyl]-N-acetyl-alpha-D-glucosamine + holo-[ACP]. It functions in the pathway glycolipid biosynthesis; lipid IV(A) biosynthesis; lipid IV(A) from (3R)-3-hydroxytetradecanoyl-[acyl-carrier-protein] and UDP-N-acetyl-alpha-D-glucosamine: step 1/6. Functionally, involved in the biosynthesis of lipid A, a phosphorylated glycolipid that anchors the lipopolysaccharide to the outer membrane of the cell. This Psychrobacter sp. (strain PRwf-1) protein is Acyl-[acyl-carrier-protein]--UDP-N-acetylglucosamine O-acyltransferase.